The primary structure comprises 170 residues: Transcription factor E (170 aa).

Residues 1 to 93 (MKEAYLYIVE…TWYVDDEIIR (93 aa)) form the HTH TFE/IIEalpha-type domain.

This sequence belongs to the TFE family. Monomer. Interaction with RNA polymerase subunits RpoF and RpoE is necessary for Tfe stimulatory transcription activity. Able to interact with Tbp and RNA polymerase in the absence of DNA promoter. Interacts both with the preinitiation and elongation complexes.

Transcription factor that plays a role in the activation of archaeal genes transcribed by RNA polymerase. Facilitates transcription initiation by enhancing TATA-box recognition by TATA-box-binding protein (Tbp), and transcription factor B (Tfb) and RNA polymerase recruitment. Not absolutely required for transcription in vitro, but particularly important in cases where Tbp or Tfb function is not optimal. It dynamically alters the nucleic acid-binding properties of RNA polymerases by stabilizing the initiation complex and destabilizing elongation complexes. Seems to translocate with the RNA polymerase following initiation and acts by binding to the non template strand of the transcription bubble in elongation complexes. The chain is Transcription factor E from Pyrobaculum islandicum (strain DSM 4184 / JCM 9189 / GEO3).